Reading from the N-terminus, the 215-residue chain is HTH-type transcriptional repressor FabR (215 aa).

Positions 10 to 70 (KTRRSLVEAA…TMVDESGLML (61 aa)) constitute an HTH tetR-type domain. The H-T-H motif DNA-binding region spans 33–52 (SLREVAREAGIAPTSFYRHF).

As to quaternary structure, homodimer.

It is found in the cytoplasm. In terms of biological role, represses the transcription of fabB, involved in unsaturated fatty acid (UFA) biosynthesis. By controlling UFA production, FabR directly influences the physical properties of the membrane bilayer. This Shigella boydii serotype 18 (strain CDC 3083-94 / BS512) protein is HTH-type transcriptional repressor FabR.